A 102-amino-acid polypeptide reads, in one-letter code: Small ribosomal subunit protein uS10 (102 aa).

A disordered region spans residues 34–58 (VSGPVPLPTKTLEVPSRKSPDGEGT).

Belongs to the universal ribosomal protein uS10 family. In terms of assembly, part of the 30S ribosomal subunit.

Its function is as follows. Involved in the binding of tRNA to the ribosomes. This chain is Small ribosomal subunit protein uS10, found in Halobacterium salinarum (strain ATCC 29341 / DSM 671 / R1).